The sequence spans 367 residues: Uroporphyrinogen decarboxylase (367 aa).

Substrate-binding positions include 28–32 (RQAGR), Asp-78, Tyr-158, Thr-213, and His-334.

It belongs to the uroporphyrinogen decarboxylase family. As to quaternary structure, homodimer.

Its subcellular location is the cytoplasm. It carries out the reaction uroporphyrinogen III + 4 H(+) = coproporphyrinogen III + 4 CO2. It functions in the pathway porphyrin-containing compound metabolism; protoporphyrin-IX biosynthesis; coproporphyrinogen-III from 5-aminolevulinate: step 4/4. Its function is as follows. Catalyzes the decarboxylation of four acetate groups of uroporphyrinogen-III to yield coproporphyrinogen-III. The polypeptide is Uroporphyrinogen decarboxylase (Ralstonia pickettii (strain 12J)).